We begin with the raw amino-acid sequence, 89 residues long: Cell division topological specificity factor (89 aa).

This sequence belongs to the MinE family.

In terms of biological role, prevents the cell division inhibition by proteins MinC and MinD at internal division sites while permitting inhibition at polar sites. This ensures cell division at the proper site by restricting the formation of a division septum at the midpoint of the long axis of the cell. This chain is Cell division topological specificity factor, found in Legionella pneumophila (strain Paris).